The chain runs to 847 residues: A-kinase anchor protein 4 (847 aa).

A propeptide spanning residues 1-187 (MIAYCGTTKM…MAASKNTNNN (187 aa)) is cleaved from the precursor. S95, S129, S189, and S203 each carry phosphoserine. A compositionally biased stretch (polar residues) spans 182–204 (KNTNNNQSPSNPATKSPSNQRSV). The disordered stretch occupies residues 182 to 209 (KNTNNNQSPSNPATKSPSNQRSVATPDG). T206 carries the phosphothreonine modification. A phosphoserine mark is found at S212, S225, and S270. Positions 218 to 231 (YYVNRLSSLVIQMA) are interaction with Prkar1a and Prkar2a. Y300 is modified (phosphotyrosine). S301, S304, S340, S430, S441, S443, S462, S491, S496, and S503 each carry phosphoserine. Residues 334–343 (YANQVASDMM) form a PKA-RI subunit binding domain region. Phosphothreonine is present on T505. The interval 511-536 (KQGTQGRVPNKVCPSKDEKREKISPS) is disordered. Over residues 524 to 533 (PSKDEKREKI) the composition is skewed to basic and acidic residues. Residues S536 and S581 each carry the phosphoserine modification. The interval 583–613 (QYEKSGGGQSSKSLSMKHFESRGAPGPSTCA) is disordered. A phosphoserine mark is found at S626, S631, S648, S650, S674, S677, S700, and S729. Residues 655 to 677 (CCDSRSKQAAPVAKRPEDQSQDS) form a disordered region.

Belongs to the AKAP110 family. Interacts with PRKAR1A and PRKAR2A. Interacts with ENO4. Interacts with QRICH2. In terms of processing, phosphorylated by STK33 during sperm flagella assembly. In terms of tissue distribution, expressed in flagella of epididymal sperm.

The protein localises to the cell projection. Its subcellular location is the cilium. It is found in the flagellum. Functionally, major structural component of sperm fibrous sheath. May play a role in sperm motility. In Rattus norvegicus (Rat), this protein is A-kinase anchor protein 4.